The following is a 101-amino-acid chain: Large ribosomal subunit protein uL23 (101 aa).

It belongs to the universal ribosomal protein uL23 family. Part of the 50S ribosomal subunit. Contacts protein L29, and trigger factor when it is bound to the ribosome.

In terms of biological role, one of the early assembly proteins it binds 23S rRNA. One of the proteins that surrounds the polypeptide exit tunnel on the outside of the ribosome. Forms the main docking site for trigger factor binding to the ribosome. The protein is Large ribosomal subunit protein uL23 of Thiobacillus denitrificans (strain ATCC 25259 / T1).